The chain runs to 324 residues: Tumor necrosis factor receptor superfamily member 6 (324 aa).

The N-terminal stretch at 1–21 (MLWIMAVLPLVLAGPELNVRM) is a signal peptide. Topologically, residues 22 to 171 (QGTDSIFEGL…CKKQSSNYKL (150 aa)) are extracellular. An N-linked (GlcNAc...) asparagine glycan is attached at Asn-43. TNFR-Cys repeat units follow at residues 43-79 (NCSEGLYQVGPFCCQPCQPGERKVKDCTTSGGAPTCH), 80-123 (PCTE…NTKC), and 124-163 (RCKENFYCNASLCDHCYHCTSCGLEDILEPCTRTSNTKCK). 9 disulfide bridges follow: Cys-44–Cys-55, Cys-56–Cys-69, Cys-59–Cys-78, Cys-81–Cys-97, Cys-100–Cys-115, Cys-103–Cys-123, Cys-125–Cys-139, Cys-142–Cys-154, and Cys-145–Cys-162. N-linked (GlcNAc...) asparagine glycosylation is found at Asn-114 and Asn-132. Residues 172-188 (LWLLILPGLAILFVFIY) traverse the membrane as a helical segment. Over 189–324 (KRYRKRQPGD…RNENEGQSLE (136 aa)) the chain is Cytoplasmic. The interaction with HIPK3 stretch occupies residues 201–306 (SGIPSPESVP…EEIQAMVWED (106 aa)). Ser-214 bears the Phosphoserine mark. The tract at residues 219–243 (NKYIWRTAEKMKICDAKKFARQHKI) is interaction with CALM. In terms of domain architecture, Death spans 219–303 (NKYIWRTAEK…DIAEEIQAMV (85 aa)).

In terms of assembly, component of the death-induced signaling complex (DISC) composed of cell surface receptor FAS/CD95, adapter protein FADD and the CASP8 protease; recruitment of CASP8 to the complex is required for processing of CASP8 into the p18 and p10 subunits. Interacts directly (via DED domain) with NOL3 (via CARD domain); inhibits death-inducing signaling complex (DISC) assembly by inhibiting the increase in FAS-FADD binding induced by FAS activation. Binds DAXX. Interacts with HIPK3. Part of a complex containing HIPK3 and FADD. Binds RIPK1 and FAIM2. Interacts with BABAM2 and FEM1B. Interacts with CALM. In the absence of stimulation, interacts with BIRC2, DDX3X and GSK3B. The interaction with BIRC2 and DDX3X is further enhanced upon receptor stimulation and accompanied by DDX3X and BIRC2 cleavage. In terms of processing, palmitoylated. Palmitoylation by ZDHHC7 prevents the lysosomal degradation of FAS regulating its expression at the plasma membrane.

Its subcellular location is the cell membrane. It is found in the membrane raft. In terms of biological role, receptor for TNFSF6/FASLG. The adapter molecule FADD recruits caspase CASP8 to the activated receptor. The resulting death-inducing signaling complex (DISC) performs CASP8 proteolytic activation which initiates the subsequent cascade of caspases (aspartate-specific cysteine proteases) mediating apoptosis. FAS-mediated apoptosis may have a role in the induction of peripheral tolerance, in the antigen-stimulated suicide of mature T-cells, or both. The protein is Tumor necrosis factor receptor superfamily member 6 (Fas) of Rattus norvegicus (Rat).